Reading from the N-terminus, the 77-residue chain is Small ribosomal subunit protein uS17 (77 aa).

This sequence belongs to the universal ribosomal protein uS17 family. Part of the 30S ribosomal subunit.

In terms of biological role, one of the primary rRNA binding proteins, it binds specifically to the 5'-end of 16S ribosomal RNA. The protein is Small ribosomal subunit protein uS17 of Rickettsia bellii (strain OSU 85-389).